A 489-amino-acid polypeptide reads, in one-letter code: Actin-related protein 4 (489 aa).

The interval 323–379 is disordered; the sequence is KRTKPSGVNKSDKKVTPTEEKEQEAVSKSTSPAANSADTPNETGKRPLEEEKPPKEN. Basic and acidic residues predominate over residues 332–347; it reads KSDKKVTPTEEKEQEA. Positions 348-364 are enriched in polar residues; sequence VSKSTSPAANSADTPNE. Serine 349 carries the phosphoserine modification. Residues 365–379 are compositionally biased toward basic and acidic residues; the sequence is TGKRPLEEEKPPKEN.

It belongs to the actin family. ARP4 subfamily. Component of the NuA4 histone acetyltransferase complex composed of at least ACT1, ARP4, EAF3, EAF5, EAF6, EAF7, EPL1, ESA1, SWC4, TRA1, VID21, YAF9 and YNG2. Component of the chromatin-remodeling INO80 complex, at least composed of ARP4, ARP5, ARP8, RVB1, RVB2, TAF14, NHP10, IES1, IES3, IES4, IES6, ACT1, IES2, IES5 and INO80. Component of the SWR1 chromatin remodeling complex composed of at least ACT1, ARP4, RVB1, RVB2, ARP6, YAF9, VPS71, VPS72, SWC3, SWC4, SWC5, SWC7 and SWR1, and perhaps BDF1. Interacts with histones H4 (HHF1 and HHF2), H3 (HHT1 and HHT2) and H2A (HTA1 and HTA2).

It localises to the nucleus. Its function is as follows. Chromatin interaction component of the NuA4 histone acetyltransferase complex which is involved in transcriptional activation of selected genes principally by acetylation of nucleosomal histone H4 and H2A. The NuA4 complex is also involved in DNA repair. ARP4 recognizes H2AS128ph (gamma-H2A) and is required for NuA4 complex integrity. Component of the SWR1 complex which mediates the ATP-dependent exchange of histone H2A for the H2A variant HZT1 leading to transcriptional regulation of selected genes by chromatin remodeling. Component of the INO80 complex which remodels chromatin by shifting nucleosomes. Its ability to induce transcription of some phosphate-responsive genes is modulated by inositol polyphosphates. The INO80 complex is involved in DNA repair by associating to gamma-H2A as a response to DNA damage. In Saccharomyces cerevisiae (strain ATCC 204508 / S288c) (Baker's yeast), this protein is Actin-related protein 4 (ARP4).